Here is a 510-residue protein sequence, read N- to C-terminus: MSAKKPLALVILDGYGYREDTASNAIANAKTPVMDALIANQPNTLISASGMDVGLPDGQMGNSEVGHTNIGAGRVVYQDLTRITKSILDGEFQQTAALVEAIDTAVKAEKAVHIMGLMSPGGVHSHEDHILAAVEMAAERGAEKIYLHCFLDGRDTPPRSAEGSLQRFQDLFAKLGKGRVASLVGRYYAMDRDNNWDRVQVAYDLLTQAKADFTYDSAVAGLAAAYERGENDEFVKATEIKAEGQESAAMQDGDAVIFMNYRADRARQITRTFVADFAGFERAAFPAVNFVMLTQYAADIPLAIAFPPASLENTYGEWLSKQGQTQLRISETEKYAHVTFFFNGGVETEFAGEERQLVASPKVATYDLQPEMSSTELTEKMVAAIKSGKYDTIICNYPNADMVGHTGVYEAAEKAIEALDASVGQVVEAIKEVGGQLLITADHGNAEMMVDPETGGIHTAHTSLPVPLIYVGDKAVEFKEGGKLSDLAPTMLSLAGLEIPAEMTGQVLVK.

Mn(2+) is bound by residues D13 and S63. The active-site Phosphoserine intermediate is the S63. Substrate is bound by residues H124, 154–155 (RD), R186, R192, 262–265 (RADR), and K334. The Mn(2+) site is built by D401, H405, D442, H443, and H461.

This sequence belongs to the BPG-independent phosphoglycerate mutase family. In terms of assembly, monomer. The cofactor is Mn(2+).

It catalyses the reaction (2R)-2-phosphoglycerate = (2R)-3-phosphoglycerate. Its pathway is carbohydrate degradation; glycolysis; pyruvate from D-glyceraldehyde 3-phosphate: step 3/5. Its function is as follows. Catalyzes the interconversion of 2-phosphoglycerate and 3-phosphoglycerate. The sequence is that of 2,3-bisphosphoglycerate-independent phosphoglycerate mutase from Vibrio vulnificus (strain YJ016).